We begin with the raw amino-acid sequence, 505 residues long: Histidine ammonia-lyase (505 aa).

The segment at residues 141–143 (ASG) is a cross-link (5-imidazolinone (Ala-Gly)). Serine 142 carries the post-translational modification 2,3-didehydroalanine (Ser).

This sequence belongs to the PAL/histidase family. Contains an active site 4-methylidene-imidazol-5-one (MIO), which is formed autocatalytically by cyclization and dehydration of residues Ala-Ser-Gly.

It localises to the cytoplasm. The catalysed reaction is L-histidine = trans-urocanate + NH4(+). The protein operates within amino-acid degradation; L-histidine degradation into L-glutamate; N-formimidoyl-L-glutamate from L-histidine: step 1/3. This chain is Histidine ammonia-lyase, found in Bacillus cereus (strain G9842).